The sequence spans 113 residues: Large ribosomal subunit protein uL24 (113 aa).

The segment at 48-70 (HRKRVTNDKGTSSGGLEKRESPM) is disordered.

Belongs to the universal ribosomal protein uL24 family. As to quaternary structure, part of the 50S ribosomal subunit.

Functionally, one of two assembly initiator proteins, it binds directly to the 5'-end of the 23S rRNA, where it nucleates assembly of the 50S subunit. Its function is as follows. One of the proteins that surrounds the polypeptide exit tunnel on the outside of the subunit. This Tropheryma whipplei (strain TW08/27) (Whipple's bacillus) protein is Large ribosomal subunit protein uL24.